A 138-amino-acid chain; its full sequence is Thyrotropin subunit beta (138 aa).

The N-terminal stretch at 1–20 is a signal peptide; it reads MTALFLMSMLFGLTCGQAMS. Cystine bridges form between C22–C72, C36–C87, C39–C125, C47–C103, C51–C105, and C108–C115. Residue N43 is glycosylated (N-linked (GlcNAc...) asparagine). The propeptide occupies 133 to 138; the sequence is LVGFSV.

It belongs to the glycoprotein hormones subunit beta family. In terms of assembly, heterodimer of a common alpha chain and a unique beta chain which confers biological specificity to thyrotropin, lutropin, follitropin and gonadotropin.

It localises to the secreted. In terms of biological role, indispensable for the control of thyroid structure and metabolism. This Homo sapiens (Human) protein is Thyrotropin subunit beta (TSHB).